The following is a 295-amino-acid chain: Delta-1-pyrroline-5-carboxylate reductase apf3 (295 aa).

Belongs to the pyrroline-5-carboxylate reductase family.

The protein operates within secondary metabolite biosynthesis. Its function is as follows. Delta-1-pyrroline-5-carboxylate reductase; part of the gene cluster that mediates the biosynthesis of the cyclic tetrapeptide apicidin F (APF). The non-ribosomal peptide synthetase apf1 incorporates four different amino acids to produce apicidin F: L-phenylalanine, D-pipecolic acid (D-pip), N-methoxy-L-tryptophan and L-2-aminooctanedioic acid. L-Phenylalanine is the only proteinogenic amino acid directly used by apf1. The 3 other apf1 substrates are non-proteinogenic and have to be modified by other enzymes of the cluster. Lysine is converted to delta-1-pyrroline-5-carboxylate (P5C) which is reduced to L-pipecolic acid (L-pip) by apf3. L-pip is epimerized to D-pip, probably by apf1 activity, prior to incorporation. L-Tryptophan is N-oxidyzed by one of the cytochrome P450 monooxygenases (apf7 or apf8), and further methylated at the hydroxy group by the O-methyltransferase apf6 to yield N-methoxy-L-tryptophan. The synthesis of the fourth apf1 substrate is more complex. The fatty acid synthase apf5 is involved in the synthesis of the octanoic acid backbone of L-2-aminooctanedioic acid by fixing one acetyl-CoA unit and three malonyl-CoA units. Then one of the cytochrome P450 monooxygenases (apf7 or apf8) may oxidize this backbone to 2-oxooctanoic acid. The aminotransferase apf4 is predicted to catalyze the exchange of the keto group with an amino group. The next step would be the oxidation of 2-aminooctanoic acid by one of the cytochrome P450 monooxygenases (apf7 or apf8). The last step is the oxidation of 2-amino-8-hydroxyoctanoic acid to 2-aminooctanedioic acid is catalyzed by the FAD-dependent monooxygenase apf9. This is Delta-1-pyrroline-5-carboxylate reductase apf3 from Gibberella fujikuroi (strain CBS 195.34 / IMI 58289 / NRRL A-6831) (Bakanae and foot rot disease fungus).